Here is a 226-residue protein sequence, read N- to C-terminus: ATP synthase F(0) complex subunit a (226 aa).

The next 6 membrane-spanning stretches (helical) occupy residues 6 to 26, 68 to 88, 97 to 117, 138 to 158, 164 to 184, and 189 to 209; these read FASFAAPTILGLPAAVLIILF, WSLMLVSLIIFITTTNLLGLL, QLSMNLAMAIPLWAGAVVMGF, IPMLVIIETISLLIQPMALAV, ITAGHLLMHLIGSATLALSTI, and ALIIFTILILLTILEIAVALI.

Belongs to the ATPase A chain family. As to quaternary structure, component of the ATP synthase complex composed at least of ATP5F1A/subunit alpha, ATP5F1B/subunit beta, ATP5MC1/subunit c (homooctomer), MT-ATP6/subunit a, MT-ATP8/subunit 8, ATP5ME/subunit e, ATP5MF/subunit f, ATP5MG/subunit g, ATP5MK/subunit k, ATP5MJ/subunit j, ATP5F1C/subunit gamma, ATP5F1D/subunit delta, ATP5F1E/subunit epsilon, ATP5PF/subunit F6, ATP5PB/subunit b, ATP5PD/subunit d, ATP5PO/subunit OSCP. ATP synthase complex consists of a soluble F(1) head domain (subunits alpha(3) and beta(3)) - the catalytic core - and a membrane F(0) domain - the membrane proton channel (subunits c, a, 8, e, f, g, k and j). These two domains are linked by a central stalk (subunits gamma, delta, and epsilon) rotating inside the F1 region and a stationary peripheral stalk (subunits F6, b, d, and OSCP). Interacts with DNAJC30; interaction is direct.

The protein localises to the mitochondrion inner membrane. The enzyme catalyses H(+)(in) = H(+)(out). Its function is as follows. Subunit a, of the mitochondrial membrane ATP synthase complex (F(1)F(0) ATP synthase or Complex V) that produces ATP from ADP in the presence of a proton gradient across the membrane which is generated by electron transport complexes of the respiratory chain. ATP synthase complex consist of a soluble F(1) head domain - the catalytic core - and a membrane F(1) domain - the membrane proton channel. These two domains are linked by a central stalk rotating inside the F(1) region and a stationary peripheral stalk. During catalysis, ATP synthesis in the catalytic domain of F(1) is coupled via a rotary mechanism of the central stalk subunits to proton translocation. With the subunit c (ATP5MC1), forms the proton-conducting channel in the F(0) domain, that contains two crucial half-channels (inlet and outlet) that facilitate proton movement from the mitochondrial intermembrane space (IMS) into the matrix. Protons are taken up via the inlet half-channel and released through the outlet half-channel, following a Grotthuss mechanism. The polypeptide is ATP synthase F(0) complex subunit a (Pan troglodytes (Chimpanzee)).